We begin with the raw amino-acid sequence, 48 residues long: Delta-stichotoxin-Hmg4a (48 aa).

Disulfide bonds link C3–C43, C5–C33, and C26–C44.

Belongs to the sea anemone sodium channel inhibitory toxin family. Type II subfamily.

It localises to the secreted. It is found in the nematocyst. Binds specifically to voltage-gated sodium channels (Nav), thereby delaying their inactivation during signal transduction. Its toxicity is weaker than that of RpIII (AC P08380). The polypeptide is Delta-stichotoxin-Hmg4a (Heteractis magnifica (Magnificent sea anemone)).